We begin with the raw amino-acid sequence, 28 residues long: Palustrin-1a (28 aa).

Cysteine 22 and cysteine 28 are oxidised to a cystine.

Expressed by the skin glands.

The protein resides in the secreted. In terms of biological role, antimicrobial activity against Gram-negative bacterium E.coli. The chain is Palustrin-1a from Lithobates palustris (Pickerel frog).